The following is a 54-amino-acid chain: MFPNSNGPNKMKALVAPSNSSTTSKTNNNNLPPNGRSSFWSIKQYSETGLPIYI.

The tract at residues M1 to S38 is disordered. A compositionally biased stretch (low complexity) spans P17–S38.

This is an uncharacterized protein from Dictyostelium discoideum (Social amoeba).